Reading from the N-terminus, the 229-residue chain is Transcriptional regulatory protein YxdJ (229 aa).

In terms of domain architecture, Response regulatory spans Lys-3–Ile-116. Residue Asp-52 is modified to 4-aspartylphosphate. The segment at residues Glu-129–Ala-227 is a DNA-binding region (ompR/PhoB-type).

Post-translationally, phosphorylated by YxdK.

The protein resides in the cytoplasm. Probable member of the two-component regulatory system YxdK/YxdJ. Positively regulates the expression of the yxdLMyxeA operon by direct interaction with its promoter region. Could also indirectly regulate the expression of the dlt operon. In Bacillus subtilis (strain 168), this protein is Transcriptional regulatory protein YxdJ (yxdJ).